The following is a 623-amino-acid chain: Endoglucanase 12 (623 aa).

Over 1 to 73 (MYSANHWGGS…LGCVVVKRKL (73 aa)) the chain is Cytoplasmic. The helical; Signal-anchor for type II membrane protein transmembrane segment at 74 to 94 (LWWVLWTLLAAFILIGLPVII) threads the bilayer. Residues 95 to 623 (AKSIPKKKPH…TPPPPSKWKP (529 aa)) are Extracellular-facing. The active-site Nucleophile is the aspartate 166. Residues asparagine 217, asparagine 236, asparagine 324, asparagine 345, asparagine 408, and asparagine 425 are each glycosylated (N-linked (GlcNAc...) asparagine). Active-site residues include histidine 513, aspartate 561, and glutamate 570.

This sequence belongs to the glycosyl hydrolase 9 (cellulase E) family. In terms of tissue distribution, ubiquitous.

It localises to the membrane. It carries out the reaction Endohydrolysis of (1-&gt;4)-beta-D-glucosidic linkages in cellulose, lichenin and cereal beta-D-glucans.. This Oryza sativa subsp. japonica (Rice) protein is Endoglucanase 12 (GLU3).